A 209-amino-acid polypeptide reads, in one-letter code: MVSDNSGNLYIVAAPSGGGKTSLVKKLIEMVGEIEVSVSHTTRPMRPGEKEGVDYFFIDEEQFISMVNEGAFIEHAKVFNHWYGTSVAQINKRLQFGIDVVLDIDWQGAEQIRHAYPDAVSVFIIPPSLDALKERLMNRRQDKDNVISERMTKAQDELGHYPEFDYLIVNDDFEKAAMELQSIVIANRLRIEKQANKQAKLLSFLLSSQ.

One can recognise a Guanylate kinase-like domain in the interval 7-185 (GNLYIVAAPS…AAMELQSIVI (179 aa)). ATP is bound at residue 14–21 (APSGGGKT).

Belongs to the guanylate kinase family.

The protein localises to the cytoplasm. The catalysed reaction is GMP + ATP = GDP + ADP. Its function is as follows. Essential for recycling GMP and indirectly, cGMP. The polypeptide is Guanylate kinase (Legionella pneumophila (strain Lens)).